We begin with the raw amino-acid sequence, 497 residues long: Glutamyl-tRNA(Gln) amidotransferase subunit A (497 aa).

Residues lysine 75 and serine 150 each act as charge relay system in the active site. Residue serine 174 is the Acyl-ester intermediate of the active site.

Belongs to the amidase family. GatA subfamily. Heterotrimer of A, B and C subunits.

It catalyses the reaction L-glutamyl-tRNA(Gln) + L-glutamine + ATP + H2O = L-glutaminyl-tRNA(Gln) + L-glutamate + ADP + phosphate + H(+). Its function is as follows. Allows the formation of correctly charged Gln-tRNA(Gln) through the transamidation of misacylated Glu-tRNA(Gln) in organisms which lack glutaminyl-tRNA synthetase. The reaction takes place in the presence of glutamine and ATP through an activated gamma-phospho-Glu-tRNA(Gln). The sequence is that of Glutamyl-tRNA(Gln) amidotransferase subunit A from Paraburkholderia phymatum (strain DSM 17167 / CIP 108236 / LMG 21445 / STM815) (Burkholderia phymatum).